The primary structure comprises 142 residues: Putative pre-16S rRNA nuclease (142 aa).

Belongs to the YqgF nuclease family.

It localises to the cytoplasm. Could be a nuclease involved in processing of the 5'-end of pre-16S rRNA. The chain is Putative pre-16S rRNA nuclease from Lactobacillus delbrueckii subsp. bulgaricus (strain ATCC BAA-365 / Lb-18).